Here is a 485-residue protein sequence, read N- to C-terminus: Glutamyl-tRNA(Gln) amidotransferase subunit A (485 aa).

Catalysis depends on charge relay system residues lysine 75 and serine 150. Serine 174 acts as the Acyl-ester intermediate in catalysis.

Belongs to the amidase family. GatA subfamily. In terms of assembly, heterotrimer of A, B and C subunits.

The enzyme catalyses L-glutamyl-tRNA(Gln) + L-glutamine + ATP + H2O = L-glutaminyl-tRNA(Gln) + L-glutamate + ADP + phosphate + H(+). Its function is as follows. Allows the formation of correctly charged Gln-tRNA(Gln) through the transamidation of misacylated Glu-tRNA(Gln) in organisms which lack glutaminyl-tRNA synthetase. The reaction takes place in the presence of glutamine and ATP through an activated gamma-phospho-Glu-tRNA(Gln). This chain is Glutamyl-tRNA(Gln) amidotransferase subunit A, found in Picosynechococcus sp. (strain ATCC 27264 / PCC 7002 / PR-6) (Agmenellum quadruplicatum).